The primary structure comprises 380 residues: tRNA(Met) cytidine acetate ligase (380 aa).

Residues 7–20 (IAEY…HLYQ), G101, N151, and R176 each bind ATP.

Belongs to the TmcAL family.

The protein resides in the cytoplasm. The catalysed reaction is cytidine(34) in elongator tRNA(Met) + acetate + ATP = N(4)-acetylcytidine(34) in elongator tRNA(Met) + AMP + diphosphate. Functionally, catalyzes the formation of N(4)-acetylcytidine (ac(4)C) at the wobble position of elongator tRNA(Met), using acetate and ATP as substrates. First activates an acetate ion to form acetyladenylate (Ac-AMP) and then transfers the acetyl group to tRNA to form ac(4)C34. This is tRNA(Met) cytidine acetate ligase from Ligilactobacillus salivarius (strain UCC118) (Lactobacillus salivarius).